We begin with the raw amino-acid sequence, 168 residues long: Endoribonuclease YbeY (168 aa).

3 residues coordinate Zn(2+): histidine 127, histidine 131, and histidine 137.

The protein belongs to the endoribonuclease YbeY family. Zn(2+) serves as cofactor.

The protein resides in the cytoplasm. Its function is as follows. Single strand-specific metallo-endoribonuclease involved in late-stage 70S ribosome quality control and in maturation of the 3' terminus of the 16S rRNA. In Chromobacterium violaceum (strain ATCC 12472 / DSM 30191 / JCM 1249 / CCUG 213 / NBRC 12614 / NCIMB 9131 / NCTC 9757 / MK), this protein is Endoribonuclease YbeY.